The sequence spans 433 residues: N-lysine methyltransferase SMYD2 (433 aa).

Positions G7–I241 constitute an SET domain. K17 to R19 serves as a coordination point for S-adenosyl-L-methionine. C52, C55, C65, C68, C74, C78, H86, and C90 together coordinate Zn(2+). Residues C52–C90 form an MYND-type zinc finger. S-adenosyl-L-methionine is bound by residues H137, N206 to H207, and Y258 to F260.

Belongs to the class V-like SAM-binding methyltransferase superfamily. In terms of assembly, interacts with RNA polymerase II and HELZ. Interacts with SIN3A and HDAC1. Interacts (via MYND-type zinc finger) with EPB41L3. Interacts (via SET domain) with p53/TP53. Interacts with RB1 and HSP90AA1.

It is found in the cytoplasm. Its subcellular location is the cytosol. It localises to the nucleus. It catalyses the reaction L-lysyl(4)-[histone H3] + 3 S-adenosyl-L-methionine = N(6),N(6),N(6)-trimethyl-L-lysyl(4)-[histone H3] + 3 S-adenosyl-L-homocysteine + 3 H(+). The catalysed reaction is L-lysyl-[protein] + S-adenosyl-L-methionine = N(6)-methyl-L-lysyl-[protein] + S-adenosyl-L-homocysteine + H(+). Its function is as follows. Protein-lysine N-methyltransferase that methylates both histones and non-histone proteins, including p53/TP53 and RB1. Specifically trimethylates histone H3 'Lys-4' (H3K4me3) in vivo. The activity requires interaction with HSP90alpha. Shows even higher methyltransferase activity on p53/TP53. Monomethylates 'Lys-370' of p53/TP53, leading to decreased DNA-binding activity and subsequent transcriptional regulation activity of p53/TP53. Monomethylates RB1 at 'Lys-860'. The protein is N-lysine methyltransferase SMYD2 (SMYD2) of Sus scrofa (Pig).